Here is a 223-residue protein sequence, read N- to C-terminus: Cytidylate kinase (223 aa).

An ATP-binding site is contributed by G13–T21.

Belongs to the cytidylate kinase family. Type 1 subfamily.

It is found in the cytoplasm. It catalyses the reaction CMP + ATP = CDP + ADP. The catalysed reaction is dCMP + ATP = dCDP + ADP. This is Cytidylate kinase from Nitrosomonas europaea (strain ATCC 19718 / CIP 103999 / KCTC 2705 / NBRC 14298).